The primary structure comprises 167 residues: Modulator of smoothened protein (167 aa).

Helical transmembrane passes span Ile7–Ile29, Thr68–Ile88, Trp101–Phe121, and Val139–Phe159.

The protein resides in the cell projection. The protein localises to the cilium membrane. It localises to the cell membrane. Functionally, acts as a negative regulator of hedgehog signaling probably by promoting internalization and subsequent degradation of smoothened protein (SMO) present in the ciliary membrane. Plays a role in sonic hedgehog (SHH)-induced spinal neural progenitor cells differentiation. The protein is Modulator of smoothened protein of Danio rerio (Zebrafish).